Reading from the N-terminus, the 163-residue chain is 6,7-dimethyl-8-ribityllumazine synthase (163 aa).

Residues F27, 58-60 (ALE), and 87-89 (CVI) contribute to the 5-amino-6-(D-ribitylamino)uracil site. (2S)-2-hydroxy-3-oxobutyl phosphate is bound at residue 92-93 (DT). H95 functions as the Proton donor in the catalytic mechanism. N120 contacts 5-amino-6-(D-ribitylamino)uracil. R134 is a binding site for (2S)-2-hydroxy-3-oxobutyl phosphate.

Belongs to the DMRL synthase family.

The catalysed reaction is (2S)-2-hydroxy-3-oxobutyl phosphate + 5-amino-6-(D-ribitylamino)uracil = 6,7-dimethyl-8-(1-D-ribityl)lumazine + phosphate + 2 H2O + H(+). It participates in cofactor biosynthesis; riboflavin biosynthesis; riboflavin from 2-hydroxy-3-oxobutyl phosphate and 5-amino-6-(D-ribitylamino)uracil: step 1/2. Its function is as follows. Catalyzes the formation of 6,7-dimethyl-8-ribityllumazine by condensation of 5-amino-6-(D-ribitylamino)uracil with 3,4-dihydroxy-2-butanone 4-phosphate. This is the penultimate step in the biosynthesis of riboflavin. The sequence is that of 6,7-dimethyl-8-ribityllumazine synthase from Afipia carboxidovorans (strain ATCC 49405 / DSM 1227 / KCTC 32145 / OM5) (Oligotropha carboxidovorans).